The sequence spans 565 residues: Adenine deaminase (565 aa).

It belongs to the metallo-dependent hydrolases superfamily. Adenine deaminase family. The cofactor is Mn(2+).

It catalyses the reaction adenine + H2O + H(+) = hypoxanthine + NH4(+). The chain is Adenine deaminase from Sinorhizobium fredii (strain NBRC 101917 / NGR234).